Reading from the N-terminus, the 132-residue chain is Small ribosomal subunit protein uS8 (132 aa).

This sequence belongs to the universal ribosomal protein uS8 family. As to quaternary structure, part of the 30S ribosomal subunit. Contacts proteins S5 and S12.

One of the primary rRNA binding proteins, it binds directly to 16S rRNA central domain where it helps coordinate assembly of the platform of the 30S subunit. The chain is Small ribosomal subunit protein uS8 from Xanthomonas axonopodis pv. citri (strain 306).